The chain runs to 91 residues: Small ribosomal subunit protein uS19 (91 aa).

The protein belongs to the universal ribosomal protein uS19 family.

Functionally, protein S19 forms a complex with S13 that binds strongly to the 16S ribosomal RNA. The polypeptide is Small ribosomal subunit protein uS19 (Leptothrix cholodnii (strain ATCC 51168 / LMG 8142 / SP-6) (Leptothrix discophora (strain SP-6))).